The following is a 346-amino-acid chain: Ribonucleoside-diphosphate reductase subunit beta (346 aa).

Positions 89, 120, and 123 each coordinate Fe cation. Tyrosine 129 is a catalytic residue. Fe cation-binding residues include glutamate 193, glutamate 227, and histidine 230.

Belongs to the ribonucleoside diphosphate reductase small chain family. As to quaternary structure, tetramer of two alpha and two beta subunits. The cofactor is Fe cation.

The catalysed reaction is a 2'-deoxyribonucleoside 5'-diphosphate + [thioredoxin]-disulfide + H2O = a ribonucleoside 5'-diphosphate + [thioredoxin]-dithiol. In terms of biological role, provides the precursors necessary for DNA synthesis. Catalyzes the biosynthesis of deoxyribonucleotides from the corresponding ribonucleotides. The polypeptide is Ribonucleoside-diphosphate reductase subunit beta (nrdB) (Chlamydia trachomatis serovar D (strain ATCC VR-885 / DSM 19411 / UW-3/Cx)).